Reading from the N-terminus, the 646-residue chain is uncharacterized protein (646 aa).

The next 10 membrane-spanning stretches (helical) occupy residues 20–40 (AYFL…SFIF), 54–74 (LVKT…IFFI), 115–135 (LAAI…FFMI), 154–174 (AFVM…ILSL), 203–223 (TVLS…ANAI), 232–252 (ILIL…VAFF), 285–305 (LFLT…IYMF), 523–543 (GVAL…IVQG), 582–602 (IGFL…FAYA), and 613–633 (FLEA…YYIV).

This sequence belongs to the ABC-4 integral membrane protein family.

The protein resides in the cell membrane. This is an uncharacterized protein from Bacillus subtilis (strain 168).